A 495-amino-acid chain; its full sequence is Glucose-6-phosphate 1-dehydrogenase (495 aa).

S1 carries the N-acetylserine modification. NADP(+) is bound by residues 15-22, R49, and K149; that span reads GASGDLAR. D-glucose 6-phosphate-binding positions include K149, 179 to 183, E217, and D236; that span reads HYLGK. The Proton acceptor role is filled by H241. R332 is an NADP(+) binding site. K335 provides a ligand contact to D-glucose 6-phosphate. Residues K341, R345, and R367 each coordinate NADP(+). A D-glucose 6-phosphate-binding site is contributed by Q369. NADP(+) contacts are provided by residues 375–377, 395–397, and K463; these read YLK and DLT.

This sequence belongs to the glucose-6-phosphate dehydrogenase family.

The catalysed reaction is D-glucose 6-phosphate + NADP(+) = 6-phospho-D-glucono-1,5-lactone + NADPH + H(+). The protein operates within carbohydrate degradation; pentose phosphate pathway; D-ribulose 5-phosphate from D-glucose 6-phosphate (oxidative stage): step 1/3. In terms of biological role, catalyzes the rate-limiting step of the oxidative pentose-phosphate pathway, which represents a route for the dissimilation of carbohydrates besides glycolysis. The main function of this enzyme is to provide reducing power (NADPH) and pentose phosphates for fatty acid and nucleic acid synthesis. The protein is Glucose-6-phosphate 1-dehydrogenase of Cyberlindnera jadinii (Torula yeast).